Consider the following 202-residue polypeptide: Probable adenylyl-sulfate kinase (202 aa).

36–43 (GLSGSGKS) contacts ATP. The active-site Phosphoserine intermediate is serine 110.

Belongs to the APS kinase family.

The enzyme catalyses adenosine 5'-phosphosulfate + ATP = 3'-phosphoadenylyl sulfate + ADP + H(+). Its pathway is sulfur metabolism; hydrogen sulfide biosynthesis; sulfite from sulfate: step 2/3. In terms of biological role, catalyzes the synthesis of activated sulfate. The chain is Probable adenylyl-sulfate kinase from Halalkalibacterium halodurans (strain ATCC BAA-125 / DSM 18197 / FERM 7344 / JCM 9153 / C-125) (Bacillus halodurans).